The following is a 1692-amino-acid chain: Adenylate cyclase (1692 aa).

2 disordered regions span residues 1–22 and 103–142; these read MDQS…FKTG and SLSD…YKEN. Positions 120–132 are enriched in basic and acidic residues; it reads ESSEKSEVPRDTR. The segment at 174 to 195 is required for interaction with gpa2; sequence FTNLTFPEPISDDSDSVEFQRD. The Ras-associating domain occupies 292-380; sequence KEFFLRVYRD…SDEEINEEDN (89 aa). LRR repeat units follow at residues 430 to 450, 454 to 474, 477 to 498, 503 to 524, 526 to 547, 549 to 570, 572 to 594, 596 to 617, 618 to 639, 660 to 681, 684 to 705, 707 to 729, 730 to 751, 753 to 774, 783 to 805, 807 to 827, 831 to 852, 855 to 876, 878 to 899, 901 to 922, and 930 to 951; these read ELIS…DFME, KLKR…PITA, QLEV…IFSG, SLKE…TRYL, NLTY…ITEL, QLET…IGSL, KLKH…IGLL, NLET…SECP, KLNS…NPSA, NLVY…VIET, NVET…ISAM, NLKY…GKLK, HLVH…VWQV, SLKV…VATS, QLKI…EFVM, TVEE…TALE, CLKV…FFQN, DLKH…STAQ, LLET…EALS, SLRF…KAEK, and QLEY…EDTN. Residues 995–1275 enclose the PPM-type phosphatase domain; it reads RYGVCGYLSR…KNVLVVIVEL (281 aa). Residues 1332–1469 enclose the Guanylate cyclase domain; the sequence is AMVFTDIKNS…PVVNRTSRVV (138 aa). 2 residues coordinate Mg(2+): Asp1337 and Asp1380. Residues Asp1337 and Asp1380 each coordinate Mn(2+). The segment covering 1585 to 1597 has biased composition (basic and acidic residues); sequence SDSKSVHGEEGGS. Residues 1585–1614 are disordered; it reads SDSKSVHGEEGGSGKRSVSSLRNVSPSEST. The segment covering 1600–1614 has biased composition (polar residues); sequence RSVSSLRNVSPSEST.

This sequence belongs to the adenylyl cyclase class-3 family. In terms of assembly, interacts (via N-terminus) with gpa2; the interaction is direct and serves to activate adenylate cyclase and cAMP-PKA signaling, to repress sexual development and gluconeogenesis. Interacts with git1. The cofactor is Mn(2+).

It localises to the cytoplasm. The enzyme catalyses ATP = 3',5'-cyclic AMP + diphosphate. With respect to regulation, activated by binding G protein gpa2. Activated by git1. In contrast to yeast cyclase, S.pombe cyclase is not likely to be regulated by RAS proteins. In terms of biological role, acts in glucose-induced cAMP signaling by catalyzing the synthesis of the second messenger, cAMP to activate PKA signaling and repress sexual development and gluconeogenesis. In Schizosaccharomyces pombe (strain 972 / ATCC 24843) (Fission yeast), this protein is Adenylate cyclase.